The primary structure comprises 340 residues: GTPase Obg (340 aa).

One can recognise an Obg domain in the interval 1–159 (MGFIDEVKLC…KHVLLKLKVL (159 aa)). One can recognise an OBG-type G domain in the interval 160–329 (SDVGIIGMPN…LSEKLKKSNS (170 aa)). GTP contacts are provided by residues 166–173 (GMPNAGKS), 191–195 (FTTVR), 212–215 (DIPG), 279–282 (NKCD), and 310–312 (NGD). Positions 173 and 193 each coordinate Mg(2+).

This sequence belongs to the TRAFAC class OBG-HflX-like GTPase superfamily. OBG GTPase family. Monomer. Mg(2+) is required as a cofactor.

The protein resides in the cytoplasm. Its function is as follows. An essential GTPase which binds GTP, GDP and possibly (p)ppGpp with moderate affinity, with high nucleotide exchange rates and a fairly low GTP hydrolysis rate. Plays a role in control of the cell cycle, stress response, ribosome biogenesis and in those bacteria that undergo differentiation, in morphogenesis control. In Wolbachia pipientis wMel, this protein is GTPase Obg.